We begin with the raw amino-acid sequence, 146 residues long: Putative calcium-binding protein CML19 (146 aa).

EF-hand domains are found at residues 3-38 (AATA…ALGE), 40-75 (MSAE…LEMG), 79-114 (ERCR…LGSH), and 115-146 (QGIE…MMDA). Ca(2+) is bound by residues aspartate 16, aspartate 18, aspartate 20, lysine 22, glutamate 27, aspartate 53, aspartate 55, aspartate 57, and glutamate 64. Ca(2+)-binding residues include aspartate 128, aspartate 130, aspartate 132, and glutamate 139.

In terms of biological role, potential calcium sensor. This chain is Putative calcium-binding protein CML19 (CML19), found in Oryza sativa subsp. japonica (Rice).